The chain runs to 681 residues: PTS system glucose-specific EIICBA component (681 aa).

The PTS EIIC type-1 domain occupies 3-414 (KKLFGQLQRI…LKYKTPGRED (412 aa)). Helical transmembrane passes span 16-36 (LMLP…GTAM), 73-93 (MIFA…AAIA), 126-146 (ILGI…GALA), 170-190 (FVPI…ALIW), 199-219 (AFST…FGFI), 273-293 (FMQG…LAIY), 303-323 (VVAG…ITEP), 328-348 (FLFV…LSFL), 355-375 (LHLG…GILP), and 383-403 (VIPV…FLIV). Residues 425-506 (TELPYAVLEA…QQIMNGQVVE (82 aa)) form the PTS EIIB type-1 domain. C447 serves as the catalytic Phosphocysteine intermediate; for EIIB activity. The region spanning 551–655 (DQVFSEKMMG…SDITPIIVTQ (105 aa)) is the PTS EIIA type-1 domain. H603 functions as the Tele-phosphohistidine intermediate; for EIIA activity in the catalytic mechanism.

Its subcellular location is the cell membrane. The enzyme catalyses N(pros)-phospho-L-histidyl-[protein] + D-glucose(out) = D-glucose 6-phosphate(in) + L-histidyl-[protein]. The phosphoenolpyruvate-dependent sugar phosphotransferase system (sugar PTS), a major carbohydrate active transport system, catalyzes the phosphorylation of incoming sugar substrates concomitantly with their translocation across the cell membrane. This system is involved in glucose transport. The polypeptide is PTS system glucose-specific EIICBA component (ptsG) (Staphylococcus aureus (strain MRSA252)).